Reading from the N-terminus, the 109-residue chain is Urocortin-2 (109 aa).

The first 22 residues, 1 to 22, serve as a signal peptide directing secretion; sequence MTRWALVVFMVLMLDRVPGTPI. The propeptide occupies 23–67; the sequence is PTFQLLPQNYPETTPSSVSSESPSDTTTGPSASWSNSKASPYLDT. The tract at residues 24–60 is disordered; the sequence is TFQLLPQNYPETTPSSVSSESPSDTTTGPSASWSNSK. Over residues 33–50 the composition is skewed to low complexity; sequence PETTPSSVSSESPSDTTT. Residues 51–60 are compositionally biased toward polar residues; it reads GPSASWSNSK. At Val-106 the chain carries Valine amide; partial.

Belongs to the sauvagine/corticotropin-releasing factor/urotensin I family. As to quaternary structure, binds with high affinity to CRF receptors 2-alpha and 2-beta. Glycosylated.

Its subcellular location is the secreted. Suppresses food intake, delays gastric emptying and decreases heat-induced edema. Might represent an endogenous ligand for maintaining homeostasis after stress. This Rattus norvegicus (Rat) protein is Urocortin-2 (Ucn2).